A 60-amino-acid chain; its full sequence is Protein translocase subunit SecE (60 aa).

The chain crosses the membrane as a helical span at residues 37 to 57; it reads LLGFALVGGIGYLIHLGYIIL.

Belongs to the SecE/SEC61-gamma family. In terms of assembly, component of the Sec protein translocase complex. Heterotrimer consisting of SecY (alpha), SecG (beta) and SecE (gamma) subunits. The heterotrimers can form oligomers, although 1 heterotrimer is thought to be able to translocate proteins. Interacts with the ribosome. May interact with SecDF, and other proteins may be involved.

The protein localises to the cell membrane. Functionally, essential subunit of the Sec protein translocation channel SecYEG. Clamps together the 2 halves of SecY. May contact the channel plug during translocation. This is Protein translocase subunit SecE from Aeropyrum pernix (strain ATCC 700893 / DSM 11879 / JCM 9820 / NBRC 100138 / K1).